The sequence spans 185 residues: Elongation factor P (185 aa).

The protein belongs to the elongation factor P family.

It is found in the cytoplasm. It functions in the pathway protein biosynthesis; polypeptide chain elongation. In terms of biological role, involved in peptide bond synthesis. Stimulates efficient translation and peptide-bond synthesis on native or reconstituted 70S ribosomes in vitro. Probably functions indirectly by altering the affinity of the ribosome for aminoacyl-tRNA, thus increasing their reactivity as acceptors for peptidyl transferase. This chain is Elongation factor P, found in Bacillus cereus (strain 03BB102).